Consider the following 962-residue polypeptide: Translation initiation factor IF-2 (962 aa).

Residues 99–365 (VKAAQTQAAP…GKKGKKLKLE (267 aa)) are disordered. Residues 117–141 (DAAKARAEAAARAEARAKAEAEAAK) show a composition bias toward basic and acidic residues. Residues 145–155 (AKAGNKAKPAA) show a composition bias toward low complexity. Over residues 173-216 (KPAEESKAEKAQADKMPSKKPAEPKEKAAKPKHERNGKGKDAKK) the composition is skewed to basic and acidic residues. Over residues 219 to 234 (KPAAPAVPQPVVSAEE) the composition is skewed to low complexity. The span at 235-269 (QAQRDEEARRAAALRAHQEALLKEKQERQARREAM) shows a compositional bias: basic and acidic residues. Positions 270–283 (KQQAEQQAKAAQEA) are enriched in low complexity. Over residues 338–354 (GGRDRNNARNGDDERVR) the composition is skewed to basic and acidic residues. The 170-residue stretch at 462–631 (PRPPVVTVMG…LLEAEVLELT (170 aa)) folds into the tr-type G domain. The segment at 471–478 (GHVDHGKT) is G1. 471 to 478 (GHVDHGKT) contacts GTP. The G2 stretch occupies residues 496–500 (GITQH). The tract at residues 517–520 (DTPG) is G3. GTP contacts are provided by residues 517-521 (DTPGH) and 571-574 (NKID). The segment at 571-574 (NKID) is G4. The tract at residues 607-609 (SAK) is G5.

Belongs to the TRAFAC class translation factor GTPase superfamily. Classic translation factor GTPase family. IF-2 subfamily.

Its subcellular location is the cytoplasm. Functionally, one of the essential components for the initiation of protein synthesis. Protects formylmethionyl-tRNA from spontaneous hydrolysis and promotes its binding to the 30S ribosomal subunits. Also involved in the hydrolysis of GTP during the formation of the 70S ribosomal complex. The protein is Translation initiation factor IF-2 of Neisseria meningitidis serogroup C (strain 053442).